The following is a 334-amino-acid chain: DNA-directed RNA polymerase subunit alpha (334 aa).

Residues 1-231 (MNMIKIEPYI…KQMSIFGVDL (231 aa)) are alpha N-terminal domain (alpha-NTD). Residues 247 to 334 (ELKTLMIKID…NRKLAKLKSN (88 aa)) form an alpha C-terminal domain (alpha-CTD) region.

This sequence belongs to the RNA polymerase alpha chain family. As to quaternary structure, homodimer. The RNAP catalytic core consists of 2 alpha, 1 beta/beta' and 1 omega subunit. When a sigma factor is associated with the core the holoenzyme is formed, which can initiate transcription.

It carries out the reaction RNA(n) + a ribonucleoside 5'-triphosphate = RNA(n+1) + diphosphate. Its function is as follows. DNA-dependent RNA polymerase catalyzes the transcription of DNA into RNA using the four ribonucleoside triphosphates as substrates. In Helicobacter hepaticus (strain ATCC 51449 / 3B1), this protein is DNA-directed RNA polymerase subunit alpha.